A 593-amino-acid chain; its full sequence is Tectonic-1 (593 aa).

An N-terminal signal peptide occupies residues 1–22 (MGSRGLPPLLLVLLNCYTSSST). Positions 37–72 (KEDLNSTKATPTTLQPSLSPRTPGTPRAPERSGPRP) are disordered. Residue Asn-41 is glycosylated (N-linked (GlcNAc...) asparagine). Positions 42–58 (STKATPTTLQPSLSPRT) are enriched in polar residues. N-linked (GlcNAc...) asparagine glycosylation occurs at Asn-303. Arg-486 carries the omega-N-methylarginine modification. Asn-536 carries N-linked (GlcNAc...) asparagine glycosylation.

It belongs to the tectonic family. In terms of assembly, part of the tectonic-like complex (also named B9 complex).

The protein localises to the cytoplasm. It localises to the cytoskeleton. Its subcellular location is the cilium basal body. It is found in the secreted. Its function is as follows. Component of the tectonic-like complex, a complex localized at the transition zone of primary cilia and acting as a barrier that prevents diffusion of transmembrane proteins between the cilia and plasma membranes. Regulator of Hedgehog (Hh), required for both activation and inhibition of the Hh pathway in the patterning of the neural tube. During neural tube development, it is required for formation of the most ventral cell types and for full Hh pathway activation. Functions in Hh signal transduction to fully activate the pathway in the presence of high Hh levels and to repress the pathway in the absence of Hh signals. Modulates Hh signal transduction downstream of SMO and RAB23. The sequence is that of Tectonic-1 (Tctn1) from Mus musculus (Mouse).